The sequence spans 287 residues: Cyclopropane mycolic acid synthase 1 (287 aa).

S-adenosyl-L-methionine is bound by residues 33–34 (YS), 68–76 (LLDVGCGWG), 94–99 (TLSKNQ), and 123–124 (WE). C269 is a catalytic residue.

This sequence belongs to the CFA/CMAS family. Homodimer.

It is found in the cytoplasm. The enzyme catalyses a 1-acyl-2-(9Z)-enoyl-sn-glycero-3-phospholipid + S-adenosyl-L-methionine = a 1-acyl-2-(9-cyclopronane)-acyl-sn-glycero-3-phospholipid + S-adenosyl-L-homocysteine + H(+). It participates in lipid metabolism; mycolic acid biosynthesis. In terms of biological role, catalyzes the conversion of a double bond to a cyclopropane ring at the distal position of an alpha mycolic acid via the transfer of a methylene group from S-adenosyl-L-methionine. Cyclopropanated mycolic acids are key factors participating in cell envelope permeability, host immunomodulation and persistence. The polypeptide is Cyclopropane mycolic acid synthase 1 (cmaA1) (Mycobacterium tuberculosis (strain ATCC 25177 / H37Ra)).